Consider the following 4835-residue polypeptide: Midasin (4835 aa).

AAA-ATPase protomer stretches follow at residues 12–161 (EVLR…PLVL), 324–689 (RSLD…HRFR), 797–1049 (MTTI…AEII), 1096–1375 (KFQD…DYIT), 1489–1738 (APTT…FGYR), and 1821–2110 (ALEA…SIDI). ATP is bound by residues 31–38 (GPSASGRT), 356–363 (GPTGIGKT), 814–821 (GTTSSGKT), 1127–1134 (GVSGAGKT), 1513–1520 (GDPGVGKS), and 1839–1846 (GSPESGKS). The linker stretch occupies residues 2197 to 4058 (SVFIASTLNA…DGTGDQNVSK (1862 aa)). Disordered regions lie at residues 4033–4056 (DQKE…DQNV) and 4108–4523 (IEEE…LLNP). 5 stretches are compositionally biased toward acidic residues: residues 4109-4133 (EEED…QGEA), 4141-4150 (EDDDSAEEYS), 4226-4241 (ADGE…EEEQ), 4282-4291 (VDIDDNEASD), and 4315-4330 (NDEE…DQEN). A compositionally biased stretch (polar residues) spans 4331-4346 (ITDSNPDANEVGTNDQ). Composition is skewed to basic and acidic residues over residues 4347–4360 (KQTH…RQEN), 4394–4415 (EFQR…KDEA), and 4429–4438 (VEFDDSKSGR). Polar residues predominate over residues 4468-4477 (HNSSCETSQS). The segment covering 4478 to 4488 (SHDRPPAEHLN) has biased composition (basic and acidic residues). In terms of domain architecture, VWFA spans 4629 to 4818 (QVLLAVDDSS…RHIEDLPETL (190 aa)).

It belongs to the midasin family. In terms of assembly, associates with pre-60S ribosomes in the nucleoplasm.

The protein resides in the nucleus. It is found in the nucleolus. The protein localises to the nucleoplasm. Functionally, nuclear chaperone required for maturation and nuclear export of pre-60S ribosome subunits. Functions at successive maturation steps to remove ribosomal factors at critical transition points, first driving the exit of early pre-60S particles from the nucleolus and then driving late pre-60S particles from the nucleus. This chain is Midasin (MDN1), found in Giardia intestinalis (Giardia lamblia).